A 324-amino-acid polypeptide reads, in one-letter code: MQKPQLLVPIIATSNGNLVHAAYFLLVGIPGLGPTIHFWLAFPLCFMYALATLGNLTIVLIIRVERRLHEPMYLFLAMLSTIDLVLSSITMPKMASLFLMGIQEIEFNICLAQMFLIHALSAVESAVLLAMAFDRFVAICHPLRHASVLTGCTVAKIGLSALTRGFVFFFPLPFILKWLSYCQTHTVTHSFCLHQDIMKLSCTDTRVNVVYGLFIILSVMGVDSLFIGFSYILILWAVLELSSRRAALKAFNTCISHLCAVLVFYVPLIGLSVVHRLGGPTSLLHVVMANTYLLLPPVVNPLVYGAKTKEICSRVLCMFSQGGK.

The Extracellular segment spans residues 1 to 38; the sequence is MQKPQLLVPIIATSNGNLVHAAYFLLVGIPGLGPTIHF. A helical transmembrane segment spans residues 39–59; it reads WLAFPLCFMYALATLGNLTIV. Residues 60–67 lie on the Cytoplasmic side of the membrane; it reads LIIRVERR. The helical transmembrane segment at 68–88 threads the bilayer; it reads LHEPMYLFLAMLSTIDLVLSS. The Extracellular segment spans residues 89 to 112; that stretch reads ITMPKMASLFLMGIQEIEFNICLA. Cysteines 110 and 202 form a disulfide. A helical membrane pass occupies residues 113–133; that stretch reads QMFLIHALSAVESAVLLAMAF. Residues 134-152 are Cytoplasmic-facing; it reads DRFVAICHPLRHASVLTGC. Residues 153 to 173 form a helical membrane-spanning segment; sequence TVAKIGLSALTRGFVFFFPLP. Residues 174–209 are Extracellular-facing; it reads FILKWLSYCQTHTVTHSFCLHQDIMKLSCTDTRVNV. A helical membrane pass occupies residues 210-230; sequence VYGLFIILSVMGVDSLFIGFS. At 231–250 the chain is on the cytoplasmic side; sequence YILILWAVLELSSRRAALKA. Residues 251 to 271 traverse the membrane as a helical segment; the sequence is FNTCISHLCAVLVFYVPLIGL. The Extracellular portion of the chain corresponds to 272-285; the sequence is SVVHRLGGPTSLLH. The helical transmembrane segment at 286–306 threads the bilayer; the sequence is VVMANTYLLLPPVVNPLVYGA. At 307 to 324 the chain is on the cytoplasmic side; the sequence is KTKEICSRVLCMFSQGGK.

The protein belongs to the G-protein coupled receptor 1 family.

The protein localises to the cell membrane. In terms of biological role, odorant receptor. This chain is Olfactory receptor 51D1 (OR51D1), found in Homo sapiens (Human).